The chain runs to 430 residues: Trigger factor (430 aa).

The PPIase FKBP-type domain maps to 157-242 (GDLVALETWS…AVEVSEPVLP (86 aa)).

This sequence belongs to the FKBP-type PPIase family. Tig subfamily.

The protein localises to the cytoplasm. It carries out the reaction [protein]-peptidylproline (omega=180) = [protein]-peptidylproline (omega=0). Its function is as follows. Involved in protein export. Acts as a chaperone by maintaining the newly synthesized protein in an open conformation. Functions as a peptidyl-prolyl cis-trans isomerase. The polypeptide is Trigger factor (Xanthomonas oryzae pv. oryzae (strain PXO99A)).